The primary structure comprises 426 residues: Glutamate-1-semialdehyde 2,1-aminomutase (426 aa).

Lys-265 is subject to N6-(pyridoxal phosphate)lysine.

This sequence belongs to the class-III pyridoxal-phosphate-dependent aminotransferase family. HemL subfamily. As to quaternary structure, homodimer. It depends on pyridoxal 5'-phosphate as a cofactor.

It is found in the cytoplasm. It catalyses the reaction (S)-4-amino-5-oxopentanoate = 5-aminolevulinate. It functions in the pathway porphyrin-containing compound metabolism; protoporphyrin-IX biosynthesis; 5-aminolevulinate from L-glutamyl-tRNA(Glu): step 2/2. This Enterobacter sp. (strain 638) protein is Glutamate-1-semialdehyde 2,1-aminomutase.